The sequence spans 1144 residues: Adenylate cyclase type 3 (1144 aa).

Over 1–79 the chain is Cytoplasmic; that stretch reads MTEDQGFSDP…FKRQRHETLL (79 aa). 5 helical membrane passes run 80–100, 105–125, 139–159, 173–193, and 226–246; these read VLVV…AVVF, LAPL…FVLC, VPYL…GLNF, AFFV…IVII, and ILAN…SYYM. Residues Asp-324, Ile-325, and Asp-368 each coordinate Mg(2+). Residues 324–329 and 366–368 contribute to the ATP site; these read DIVGFT and LGD. The helical transmembrane segment at 381–401 threads the bilayer; it reads EDHAVCSILMGLAMVEAISYV. The Cytoplasmic portion of the chain corresponds to 402–630; that stretch reads REKTKTGVDM…RYSVEKEKQS (229 aa). Arg-412 lines the ATP pocket. Lys-465 is covalently cross-linked (Glycyl lysine isopeptide (Lys-Gly) (interchain with G-Cter in SUMO3)). Positions 504–563 are disordered; sequence QNGLNGSALPNGAPASKPSSPALIETKEPNGSAHASGSTSEEAEEQEAQADNPSFPNPRR. Position 523 is a phosphoserine (Ser-523). Over residues 534–543 the composition is skewed to low complexity; it reads GSAHASGSTS. A Phosphoserine modification is found at Ser-578. The next 3 membrane-spanning stretches (helical) occupy residues 631-651, 662-682, and 706-726; these read GAAF…EILI, FVVG…AIFP, and WAML…LSCL. An N-linked (GlcNAc...) asparagine glycan is attached at Asn-734. The next 3 membrane-spanning stretches (helical) occupy residues 755–775, 777–797, and 833–853; these read VAVL…MVKL, LMLL…CPVF, and LPLV…MLSF. Over 854–1144 the chain is Cytoplasmic; it reads YYFSRHVEKL…TLPHQVVDNP (291 aa). Residues Lys-975, 1062-1064, and 1069-1073 contribute to the ATP site; these read DIW and NVASR. Phosphoserine; by CaMK2 is present on Ser-1076. Position 1109 (Lys-1109) interacts with ATP.

This sequence belongs to the adenylyl cyclase class-4/guanylyl cyclase family. It depends on Mg(2+) as a cofactor. The cofactor is Mn(2+). In terms of processing, N-glycosylated. Sumoylated. Sumoylation is required for targeting ot olfactory cilia. Post-translationally, rapidly phosphorylated after stimulation by odorants or forskolin. Phosphorylation by CaMK2 at Ser-1076 down-regulates enzyme activity. Detected on cilia on the olfactory epithelium (at protein level). Detected on cilia on the olfactory epithelium.

The protein localises to the cell membrane. The protein resides in the golgi apparatus. It localises to the cell projection. It is found in the cilium. Its subcellular location is the cytoplasm. It catalyses the reaction ATP = 3',5'-cyclic AMP + diphosphate. With respect to regulation, specifically activated by the G alpha protein GNAL/G(olf) in signaling cascades triggered by odorant receptors. Activated by forskolin. After forskolin treatment, activity is further increased by calcium/calmodulin. In the absence of forskolin, calcium/calmodulin has little effect on enzyme activity. Functionally, catalyzes the formation of the signaling molecule cAMP in response to G-protein signaling. Participates in signaling cascades triggered by odorant receptors via its function in cAMP biosynthesis: specifically activated by G alpha protein GNAL/G(olf) in olfactory epithelium. Required for the perception of odorants. Required for normal sperm motility and normal male fertility. Plays a role in regulating insulin levels and body fat accumulation in response to a high fat diet. The sequence is that of Adenylate cyclase type 3 from Rattus norvegicus (Rat).